Consider the following 379-residue polypeptide: MSGFLPFSRPAMGVEELAAVKEVLESGWITTGPKNQALEQAFCQLTGNQHAIAVSSATAGMHITLMALEIGKGDEVITPSLTWVSTLNMISLLGATPVMVDVDRDTLMVTPEVIEAAITPRTKAIIPVHYAGAPADIDAIRAIGERYGIAVIEDAAHAVGTYYKGRHIGAKGTAIFSFHAIKNITCAEGGLIVTDNENLARQLRMLKFHGLGVDAYDRHTWGRAPQAEVLTPGYKYNLTDINAAIALTQLVKLEHLNTRRREIAQQYQQALAALPFQPLSLPAWPHVHAWHLFIIRVDEQRCGISRDALMEALKEIGIGTGLHFRAAHTQKYYRERFPTLSLPNTEWNSERICSLPLFPDMTTADADRVITALQQLAGQ.

Residue Lys182 is modified to N6-(pyridoxal phosphate)lysine.

The protein belongs to the DegT/DnrJ/EryC1 family. ArnB subfamily. In terms of assembly, homodimer. Requires pyridoxal 5'-phosphate as cofactor.

It catalyses the reaction UDP-4-amino-4-deoxy-beta-L-arabinose + 2-oxoglutarate = UDP-beta-L-threo-pentopyranos-4-ulose + L-glutamate. Its pathway is nucleotide-sugar biosynthesis; UDP-4-deoxy-4-formamido-beta-L-arabinose biosynthesis; UDP-4-deoxy-4-formamido-beta-L-arabinose from UDP-alpha-D-glucuronate: step 2/3. It functions in the pathway bacterial outer membrane biogenesis; lipopolysaccharide biosynthesis. Functionally, catalyzes the conversion of UDP-4-keto-arabinose (UDP-Ara4O) to UDP-4-amino-4-deoxy-L-arabinose (UDP-L-Ara4N). The modified arabinose is attached to lipid A and is required for resistance to polymyxin and cationic antimicrobial peptides. This is UDP-4-amino-4-deoxy-L-arabinose--oxoglutarate aminotransferase from Escherichia coli O127:H6 (strain E2348/69 / EPEC).